Here is a 209-residue protein sequence, read N- to C-terminus: Thymidine kinase (209 aa).

Residues 9-16 and 88-91 each bind ATP; these read SAMNAGKT and DEAQ. Glu-89 serves as the catalytic Proton acceptor.

It belongs to the thymidine kinase family. As to quaternary structure, homotetramer.

The protein resides in the cytoplasm. The enzyme catalyses thymidine + ATP = dTMP + ADP + H(+). The sequence is that of Thymidine kinase from Xanthomonas oryzae pv. oryzae (strain MAFF 311018).